We begin with the raw amino-acid sequence, 410 residues long: Centromere protein U (410 aa).

The disordered stretch occupies residues 1 to 72 (MAARRSLRYS…YETFDPPLHS (72 aa)). Residues 4 to 21 (RRSLRYSGDPGAKRSRNT) carry the Nuclear localization signal motif. Positions 28 to 38 (RKQKAGQKPKR) are enriched in basic residues. A Phosphothreonine; by PLK1 modification is found at threonine 73. The tract at residues 87–228 (SSTSPATHRG…THSDASESMH (142 aa)) is disordered. Over residues 101 to 115 (NLNPSENEASGNDSI) the composition is skewed to polar residues. Serine 105, serine 110, serine 114, serine 130, serine 133, and serine 135 each carry phosphoserine. The segment covering 138–149 (DNVRRSVSIERP) has biased composition (basic and acidic residues). The segment covering 158-169 (PAAASSSSSPSE) has biased composition (low complexity). A Glycyl lysine isopeptide (Lys-Gly) (interchain with G-Cter in SUMO2) cross-link involves residue lysine 179. A Phosphoserine modification is found at serine 186. Threonine 191 is modified (phosphothreonine). A compositionally biased stretch (basic residues) spans 200-218 (TQKKVRPSPGRRKRPRRGS). Serine 224 bears the Phosphoserine mark. A coiled-coil region spans residues 289–352 (QMLKALKRKN…LKNSKHFLSN (64 aa)). The Nuclear localization signal signature appears at 295-312 (KRKNTKIISNMEKKRQRL).

Belongs to the CENP-U/AME1 family. As to quaternary structure, component of the CENPA-NAC complex, at least composed of CENPA, CENPC, CENPH, CENPM, CENPN, CENPT and CENPU. The CENPA-NAC complex interacts with the CENPA-CAD complex, composed of CENPI, CENPK, CENPL, CENPO, CENPP, CENPQ, CENPR and CENPS. Interacts with MLF1. In terms of processing, phosphorylated by PLK1 at Thr-73, creating a self-tethering site that specifically interacts with the polo-box domain of PLK1. As to expression, expressed at high levels in glioblastoma cell lines. Up-regulated in GBM (glioblastoma multiforme) tumors. Significantly increased in both the tumor core as well as the contralateral striatum and cortex in gliomas.

The protein localises to the cytoplasm. It is found in the nucleus. Its subcellular location is the chromosome. It localises to the centromere. The protein resides in the kinetochore. In terms of biological role, component of the CENPA-NAC (nucleosome-associated) complex, a complex that plays a central role in assembly of kinetochore proteins, mitotic progression and chromosome segregation. The CENPA-NAC complex recruits the CENPA-CAD (nucleosome distal) complex and may be involved in incorporation of newly synthesized CENPA into centromeres. Plays an important role in the correct PLK1 localization to the mitotic kinetochores. A scaffold protein responsible for the initial recruitment and maintenance of the kinetochore PLK1 population until its degradation. Involved in transcriptional repression. This is Centromere protein U (Cenpu) from Rattus norvegicus (Rat).